The primary structure comprises 496 residues: Glycerol kinase (496 aa).

ADP is bound at residue threonine 12. ATP-binding residues include threonine 12, threonine 13, and serine 14. Residue threonine 12 coordinates sn-glycerol 3-phosphate. Arginine 16 lines the ADP pocket. Sn-glycerol 3-phosphate is bound by residues arginine 82, glutamate 83, and tyrosine 134. Residues arginine 82, glutamate 83, and tyrosine 134 each contribute to the glycerol site. Histidine 230 is subject to Phosphohistidine; by HPr. Residue aspartate 244 participates in sn-glycerol 3-phosphate binding. Glycerol contacts are provided by aspartate 244 and glutamine 245. Residues threonine 266 and glycine 309 each coordinate ADP. The ATP site is built by threonine 266, glycine 309, glutamine 313, and glycine 410. Glycine 410 and asparagine 414 together coordinate ADP.

The protein belongs to the FGGY kinase family. In terms of assembly, homotetramer and homodimer (in equilibrium). Post-translationally, the phosphoenolpyruvate-dependent sugar phosphotransferase system (PTS), including enzyme I, and histidine-containing protein (HPr) are required for the phosphorylation, which leads to the activation of the enzyme.

It carries out the reaction glycerol + ATP = sn-glycerol 3-phosphate + ADP + H(+). Its pathway is polyol metabolism; glycerol degradation via glycerol kinase pathway; sn-glycerol 3-phosphate from glycerol: step 1/1. Its activity is regulated as follows. Activated by phosphorylation and inhibited by fructose 1,6-bisphosphate (FBP). Its function is as follows. Key enzyme in the regulation of glycerol uptake and metabolism. Catalyzes the phosphorylation of glycerol to yield sn-glycerol 3-phosphate. The protein is Glycerol kinase of Bacillus cereus (strain Q1).